We begin with the raw amino-acid sequence, 516 residues long: MALSQFVPFSATELLLTSTVFCLVFWVFKGLRPRVPKGLKSPPEPWRWPLLGHVLTLGKNPHLALTKMSQRYGDVLQIHIGSTPVVVLSGLDTIRQALVRQGDDFKGRPDLYSFTLITDGQSMSFSPDSGPVWAARRRLAQNALNTFSIASDPASSSSCYLEEHVSKEAEALIGRLQELMAGPGRFDPYNQIVESVVKVIGAMCFGQHFPESSDEMLSLMKNSHVFVENATSGNPVDFFPILRYLPNPALQRFKAFNQRFLRFLRETVQEHYQDSDKNSVQDITGALFKHCEKRSGASGDLIPQEKIVNLVNDIFGAGFDTITTAISWSLMYLVTKPEIQRKIQKELDTVIGRGRRPRLSDRPQLPYLEAFILETFRHSSFVPFTIPHSTTRDTTLKGFYIPKECCVFINQWQVNHDPQLWGDPSEFRPERFLTAKGTALNKPLSEKILLFGLGKRRCIGEVLGKWEVFLFLAILLQQLEFSVPPGVQIDLTPTYGLTMKHARCEHVQARLRFSFQ.

S69 is a glycosylation site (O-linked (GlcNAc) serine). Substrate is bound at residue F226. C458 contacts heme.

The protein belongs to the cytochrome P450 family. In terms of assembly, interacts with PGRMC1; the interaction requires PGRMC1 homodimerization. The cofactor is heme.

It localises to the endoplasmic reticulum membrane. It is found in the microsome membrane. The enzyme catalyses an organic molecule + reduced [NADPH--hemoprotein reductase] + O2 = an alcohol + oxidized [NADPH--hemoprotein reductase] + H2O + H(+). The catalysed reaction is 17beta-estradiol + reduced [NADPH--hemoprotein reductase] + O2 = 2-hydroxy-17beta-estradiol + oxidized [NADPH--hemoprotein reductase] + H2O + H(+). It catalyses the reaction 17beta-estradiol + reduced [NADPH--hemoprotein reductase] + O2 = 4-hydroxy-17beta-estradiol + oxidized [NADPH--hemoprotein reductase] + H2O + H(+). It carries out the reaction estrone + reduced [NADPH--hemoprotein reductase] + O2 = 2-hydroxyestrone + oxidized [NADPH--hemoprotein reductase] + H2O + H(+). The enzyme catalyses estrone + reduced [NADPH--hemoprotein reductase] + O2 = 4-hydroxyestrone + oxidized [NADPH--hemoprotein reductase] + H2O + H(+). The catalysed reaction is cholesterol + reduced [NADPH--hemoprotein reductase] + O2 = 25-hydroxycholesterol + oxidized [NADPH--hemoprotein reductase] + H2O + H(+). It catalyses the reaction all-trans-retinol + reduced [NADPH--hemoprotein reductase] + O2 = all-trans-retinal + oxidized [NADPH--hemoprotein reductase] + 2 H2O + H(+). It carries out the reaction all-trans-retinal + reduced [NADPH--hemoprotein reductase] + O2 = all-trans-retinoate + oxidized [NADPH--hemoprotein reductase] + H2O + 2 H(+). The enzyme catalyses (5Z,8Z,11Z,14Z)-eicosatetraenoate + reduced [NADPH--hemoprotein reductase] + O2 = (14R,15S)-epoxy-(5Z,8Z,11Z)-eicosatrienoate + oxidized [NADPH--hemoprotein reductase] + H2O + H(+). The catalysed reaction is (5Z,8Z,11Z,14Z)-eicosatetraenoate + reduced [NADPH--hemoprotein reductase] + O2 = (14S,15R)-epoxy-(5Z,8Z,11Z)-eicosatrienoate + oxidized [NADPH--hemoprotein reductase] + H2O + H(+). It catalyses the reaction (5Z,8Z,11Z,14Z,17Z)-eicosapentaenoate + reduced [NADPH--hemoprotein reductase] + O2 = (17R,18S)-epoxy-(5Z,8Z,11Z,14Z)-eicosatetraenoate + oxidized [NADPH--hemoprotein reductase] + H2O + H(+). It carries out the reaction (4Z,7Z,10Z,13Z,16Z,19Z)-docosahexaenoate + reduced [NADPH--hemoprotein reductase] + O2 = (19R,20S)-epoxy-(4Z,7Z,10Z,13Z,16Z)-docosapentaenoate + oxidized [NADPH--hemoprotein reductase] + H2O + H(+). The enzyme catalyses (5S)-hydroperoxy-(6E,8Z,11Z,14Z)-eicosatetraenoate = 5-oxo-(6E,8Z,11Z,14Z)-eicosatetraenoate + H2O. The catalysed reaction is (12S)-hydroperoxy-(5Z,8Z,10E,14Z)-eicosatetraenoate = 12-oxo-(5Z,8Z,10E,14Z)-eicosatetraenoate + H2O. It catalyses the reaction (15S)-hydroperoxy-(5Z,8Z,11Z,13E)-eicosatetraenoate = 15-oxo-(5Z,8Z,11Z,13E)-eicosatetraenoate + H2O. It carries out the reaction (13S)-hydroperoxy-(9Z,11E)-octadecadienoate = 13-oxo-(9Z,11E)-octadecadienoate + H2O. The enzyme catalyses (5Z,8Z,11Z,14Z)-eicosatetraenoate + reduced [NADPH--hemoprotein reductase] + O2 = 13-hydroxy-(5Z,8Z,11Z,14Z)-eicosatetraenoate + oxidized [NADPH--hemoprotein reductase] + H2O + H(+). The catalysed reaction is (5Z,8Z,11Z,14Z)-eicosatetraenoate + reduced [NADPH--hemoprotein reductase] + O2 = 19-hydroxy-(5Z,8Z,11Z,14Z)-eicosatetraenoate + oxidized [NADPH--hemoprotein reductase] + H2O + H(+). It catalyses the reaction (9Z,12Z)-octadecadienoate + reduced [NADPH--hemoprotein reductase] + O2 = 11-hydroxy-(9Z,12Z)-octadecadienoate + oxidized [NADPH--hemoprotein reductase] + H2O + H(+). The protein operates within cofactor metabolism; retinol metabolism. It functions in the pathway steroid metabolism; cholesterol metabolism. Its pathway is lipid metabolism; arachidonate metabolism. Its function is as follows. A cytochrome P450 monooxygenase involved in the metabolism of various endogenous substrates, including fatty acids, steroid hormones and vitamins. Mechanistically, uses molecular oxygen inserting one oxygen atom into a substrate, and reducing the second into a water molecule, with two electrons provided by NADPH via cytochrome P450 reductase (NADPH--hemoprotein reductase). Catalyzes the hydroxylation of carbon-hydrogen bonds. Exhibits high catalytic activity for the formation of hydroxyestrogens from estrone (E1) and 17beta-estradiol (E2), namely 2-hydroxy E1 and E2. Metabolizes cholesterol toward 25-hydroxycholesterol, a physiological regulator of cellular cholesterol homeostasis. May act as a major enzyme for all-trans retinoic acid biosynthesis in the liver. Catalyzes two successive oxidative transformation of all-trans retinol to all-trans retinal and then to the active form all-trans retinoic acid. Primarily catalyzes stereoselective epoxidation of the last double bond of polyunsaturated fatty acids (PUFA), displaying a strong preference for the (R,S) stereoisomer. Catalyzes bisallylic hydroxylation and omega-1 hydroxylation of PUFA. May also participate in eicosanoids metabolism by converting hydroperoxide species into oxo metabolites (lipoxygenase-like reaction, NADPH-independent). Plays a role in the oxidative metabolism of xenobiotics. Catalyzes the N-hydroxylation of heterocyclic amines and the O-deethylation of phenacetin. Metabolizes caffeine via N3-demethylation. The polypeptide is Cytochrome P450 1A2 (CYP1A2) (Callithrix jacchus (White-tufted-ear marmoset)).